Consider the following 469-residue polypeptide: A-type ATP synthase subunit B (469 aa).

This sequence belongs to the ATPase alpha/beta chains family. As to quaternary structure, has multiple subunits with at least A(3), B(3), C, D, E, F, H, I and proteolipid K(x).

The protein resides in the cell membrane. In terms of biological role, component of the A-type ATP synthase that produces ATP from ADP in the presence of a proton gradient across the membrane. The B chain is a regulatory subunit. This chain is A-type ATP synthase subunit B, found in Staphylothermus marinus (strain ATCC 43588 / DSM 3639 / JCM 9404 / F1).